The following is a 238-amino-acid chain: ATP-dependent Clp protease proteolytic subunit 4 (238 aa).

Residue S113 is the Nucleophile of the active site. H138 is an active-site residue.

It belongs to the peptidase S14 family. In terms of assembly, fourteen ClpP subunits assemble into 2 heptameric rings which stack back to back to give a disk-like structure with a central cavity, resembling the structure of eukaryotic proteasomes.

It is found in the cytoplasm. The catalysed reaction is Hydrolysis of proteins to small peptides in the presence of ATP and magnesium. alpha-casein is the usual test substrate. In the absence of ATP, only oligopeptides shorter than five residues are hydrolyzed (such as succinyl-Leu-Tyr-|-NHMec, and Leu-Tyr-Leu-|-Tyr-Trp, in which cleavage of the -Tyr-|-Leu- and -Tyr-|-Trp bonds also occurs).. Its function is as follows. Cleaves peptides in various proteins in a process that requires ATP hydrolysis. Has a chymotrypsin-like activity. Plays a major role in the degradation of misfolded proteins. The sequence is that of ATP-dependent Clp protease proteolytic subunit 4 from Frankia casuarinae (strain DSM 45818 / CECT 9043 / HFP020203 / CcI3).